The chain runs to 604 residues: MLLKELSALASPLNDQQIGQLQQAASELSPQQLAWVSGYFWGISQTSGATQPINQAAAAVSSQPAGKLSIIFASQTGNAKGVAEALKEEAAAAGIAVELFDASDYKGKHLAKETHVIIVASTNGEGEAPDNAIELHEFLQSKKAPKLDNLHYGVIGLGDSSYEFFCQTGKDFDAFLSKQGATPFIERVDLDVDYEAPAAEWRKQALDKVKEALASEAQSAQVVQLPVGQAAHTSQYSKQNPYTATLLTSQKITGRDSGKDVRHIEIDLDGSGLTYQPGDALGVWFENSPELASAILKQVGLTGDEAVEVDGDSISLQKALVEKYEITSANPQLVTQYAELSGSKKLEKLAADKDKLRQYSGNTQVIDVLSEKKAKLTAEQLVGLLRRLTPRLYSIASSQSEVDEEVHLTVGVVEYLQGDETRFGGASSFLSHRLEEGDDVKVFVEHNNNFKLPQDDNAPVIMIGPGTGIAPFRSFVQERDNRDAEGKNWLFFGDRIFTQDFLYQVEWQKYLKSGIVNQLDVAFSRDQQEKVYVQHRILEHAAQVWQWLQDGAYIYVCGDATRMAKDVHEALICVVEQHGQKTREEAEQFVNELRKAKRYQRDVY.

A Flavodoxin-like domain is found at 68-206 (LSIIFASQTG…PAAEWRKQAL (139 aa)). Residues 74 to 79 (SQTGNA), 121 to 124 (STNG), and 157 to 166 (LGDSSYEFFC) each bind FMN. The FAD-binding FR-type domain maps to 239–453 (QNPYTATLLT…VEHNNNFKLP (215 aa)). Residues Thr-327, Gly-361, 391–394 (RLYS), 409–411 (TVG), Tyr-415, and 424–427 (GGAS) each bind FAD. Residues 524–525 (SR), 530–534 (KVYVQ), and Asp-566 each bind NADP(+). Tyr-604 lines the FAD pocket.

It belongs to the NADPH-dependent sulphite reductase flavoprotein subunit CysJ family. The protein in the N-terminal section; belongs to the flavodoxin family. In the C-terminal section; belongs to the flavoprotein pyridine nucleotide cytochrome reductase family. As to quaternary structure, alpha(8)-beta(8). The alpha component is a flavoprotein, the beta component is a hemoprotein. FAD is required as a cofactor. It depends on FMN as a cofactor.

It carries out the reaction hydrogen sulfide + 3 NADP(+) + 3 H2O = sulfite + 3 NADPH + 4 H(+). The protein operates within sulfur metabolism; hydrogen sulfide biosynthesis; hydrogen sulfide from sulfite (NADPH route): step 1/1. Its function is as follows. Component of the sulfite reductase complex that catalyzes the 6-electron reduction of sulfite to sulfide. This is one of several activities required for the biosynthesis of L-cysteine from sulfate. The flavoprotein component catalyzes the electron flow from NADPH -&gt; FAD -&gt; FMN to the hemoprotein component. This Aliivibrio fischeri (strain ATCC 700601 / ES114) (Vibrio fischeri) protein is Sulfite reductase [NADPH] flavoprotein alpha-component.